The following is a 479-amino-acid chain: MTYQAVIGLEVHLQLNTRSKIFSACPADYHGAGPNEFTDPLTLGLPGTLPTLNRRAVELAMMFGLGLGCDVSGFTQFHRKNYFYPDAPKNFQLSQYDRPIARDGYLDVPGEGGPERIRIKRAHLEDDAGKLVHPTYAPYSLLDLNRAGSALIEMVTEADITGPEQARAFLESVQAIAQSLGVSDATPEEGKMRCDVNISIHKPGEPWGTKVEVKNLNSFRSVARAIEYEAARQAKVLDAGGIITQDTLGWDEGGQKTFLMRTKEGEADYRYFPEPDLPPLDITPEWIAEVRARMPELPAQKLERYRAAGVRESDAQTLSLSVSLSKFYDEALKSGSDTQKPDAQKLANWLLTDVAGALAAQEKGVEDSDLQPAHLAALVGLIDAGTISGKIAKDLLPDVLAGHDPAQLVQERGLSVVTDTGAIDAAIDAAMEADPATVEKVRGGNAKAMNALFGPVMKAMGGKAKPEVVRERLTAKLGL.

This sequence belongs to the GatB/GatE family. GatB subfamily. Heterotrimer of A, B and C subunits.

The enzyme catalyses L-glutamyl-tRNA(Gln) + L-glutamine + ATP + H2O = L-glutaminyl-tRNA(Gln) + L-glutamate + ADP + phosphate + H(+). The catalysed reaction is L-aspartyl-tRNA(Asn) + L-glutamine + ATP + H2O = L-asparaginyl-tRNA(Asn) + L-glutamate + ADP + phosphate + 2 H(+). Its function is as follows. Allows the formation of correctly charged Asn-tRNA(Asn) or Gln-tRNA(Gln) through the transamidation of misacylated Asp-tRNA(Asn) or Glu-tRNA(Gln) in organisms which lack either or both of asparaginyl-tRNA or glutaminyl-tRNA synthetases. The reaction takes place in the presence of glutamine and ATP through an activated phospho-Asp-tRNA(Asn) or phospho-Glu-tRNA(Gln). This Deinococcus radiodurans (strain ATCC 13939 / DSM 20539 / JCM 16871 / CCUG 27074 / LMG 4051 / NBRC 15346 / NCIMB 9279 / VKM B-1422 / R1) protein is Aspartyl/glutamyl-tRNA(Asn/Gln) amidotransferase subunit B.